The following is a 352-amino-acid chain: Nicotinate-nucleotide--dimethylbenzimidazole phosphoribosyltransferase (352 aa).

Glu-318 functions as the Proton acceptor in the catalytic mechanism.

Belongs to the CobT family.

It catalyses the reaction 5,6-dimethylbenzimidazole + nicotinate beta-D-ribonucleotide = alpha-ribazole 5'-phosphate + nicotinate + H(+). The protein operates within nucleoside biosynthesis; alpha-ribazole biosynthesis; alpha-ribazole from 5,6-dimethylbenzimidazole: step 1/2. In terms of biological role, catalyzes the synthesis of alpha-ribazole-5'-phosphate from nicotinate mononucleotide (NAMN) and 5,6-dimethylbenzimidazole (DMB). The chain is Nicotinate-nucleotide--dimethylbenzimidazole phosphoribosyltransferase from Azotobacter vinelandii (strain DJ / ATCC BAA-1303).